The chain runs to 156 residues: MTTFNAKPDFSLFLQALSWEIDDQAGIEVRNDLLREVGRGMAGRLQPPLCNTIHQLQIELNALLGMINWGYVKLELLAEEQAMRIVHEDLPQVGSAGEPSGTWLAPVLEGLYGRWITSQPGAFGDYVVTRDVDAEDLNSVPTQTIILYMRTRSNSN.

The protein operates within glycan metabolism; bacterial cellulose biosynthesis. Its function is as follows. May have a major role in the perfection of crystallization, involved either in the pore structure itself or in the organization of the pores within the linear array of terminal synthesizing complexes (TCs). In Komagataeibacter xylinus (Gluconacetobacter xylinus), this protein is Cellulose synthase operon protein D (bcsDI).